A 794-amino-acid chain; its full sequence is PAN2-PAN3 deadenylation complex subunit PAN3 (794 aa).

Residues 7–36 form a C3H1-type zinc finger; that stretch reads SAKDVLCKNILIYGYCKFQDKGCAFSHNKQ. Disordered stretches follow at residues 40-97 and 187-226; these read PQQQ…TQSK and AQVG…QQQL. Composition is skewed to polar residues over residues 83 to 94 and 189 to 199; these read IQSNGMVNSQET and VGNNPGSTAPA. Over residues 200–226 the composition is skewed to low complexity; sequence NLQLQQKQPQQPQQPQQPQQHQQQQQL. The pseudokinase domain stretch occupies residues 372-668; it reads QTMQHLSLPD…MDQFILQYIS (297 aa). ATP-binding positions include arginine 425 and 494–501; that span reads DYYPNLTT. Residues 669 to 707 adopt a coiled-coil conformation; it reads SHFMTLMNKLQNSHDWVELQLSTELENARLFRLMTKINF. Residues 708–794 form a knob domain region; it reads IISEMPTYDL…IDTQFRLLRG (87 aa).

Belongs to the protein kinase superfamily. PAN3 family. In terms of assembly, homodimer. Forms a heterotrimer with a catalytic subunit PAN2 to form the poly(A)-nuclease (PAN) deadenylation complex. Interacts (via PAM-2 motif) with poly(A)-binding protein PAB1 (via PABC domain), conferring substrate specificity of the enzyme complex.

Its subcellular location is the cytoplasm. Regulatory subunit of the poly(A)-nuclease (PAN) deadenylation complex, one of two cytoplasmic mRNA deadenylases involved in mRNA turnover. PAN specifically shortens poly(A) tails of RNA and the activity is stimulated by poly(A)-binding protein PAB1. PAN deadenylation is followed by rapid degradation of the shortened mRNA tails by the CCR4-NOT complex. Deadenylated mRNAs are then degraded by two alternative mechanisms, namely exosome-mediated 3'-5' exonucleolytic degradation, or deadenylation-dependent mRNA decaping and subsequent 5'-3' exonucleolytic degradation by XRN1. May also be involved in post-transcriptional maturation of mRNA poly(A) tails. PAN3 acts as a positive regulator for PAN activity, recruiting the catalytic subunit PAN2 to mRNA via its interaction with RNA and with PAB1. In Lodderomyces elongisporus (strain ATCC 11503 / CBS 2605 / JCM 1781 / NBRC 1676 / NRRL YB-4239) (Yeast), this protein is PAN2-PAN3 deadenylation complex subunit PAN3.